A 591-amino-acid polypeptide reads, in one-letter code: N-acetylgalactosaminyltransferase 7 (591 aa).

Residues 1-11 are Cytoplasmic-facing; sequence MRVSTIRSGRI. Residues 12 to 29 form a helical; Signal-anchor for type II membrane protein membrane-spanning segment; the sequence is CRLALCLLVLLPLLYLLA. Asparagine 30 carries an N-linked (GlcNAc...) asparagine glycan. Topologically, residues 30–591 are lumenal; it reads NWSDHHKRVQ…WWFKEIRPRW (562 aa). The tract at residues 68–100 is disordered; the sequence is DGLGNFEPKDVKPRSGPGENGEAHSLSPDKKHM. 5 disulfides stabilise this stretch: cysteine 132/cysteine 367, cysteine 358/cysteine 441, cysteine 479/cysteine 496, cysteine 519/cysteine 532, and cysteine 558/cysteine 573. The segment at 141–251 is catalytic subdomain A; the sequence is LPRTSVIIVF…TNWLPPLLAP (111 aa). Substrate is bound by residues aspartate 182 and arginine 212. 2 residues coordinate Mn(2+): aspartate 235 and histidine 237. Positions 313 to 375 are catalytic subdomain B; it reads PYRSPTHAGG…PCSRVGHVYR (63 aa). A substrate-binding site is contributed by tryptophan 344. Histidine 372 serves as a coordination point for Mn(2+). Positions 375 and 380 each coordinate substrate. The region spanning 466-585 is the Ricin B-type lectin domain; the sequence is LHWGELRSVA…NDSYQQWWFK (120 aa). N-linked (GlcNAc...) asparagine glycosylation is present at asparagine 576.

It belongs to the glycosyltransferase 2 family. GalNAc-T subfamily. The cofactor is Mn(2+). Expressed in developing oocytes and egg chambers. During embryonic stages 9-11, expressed in the primordium of the foregut, midgut and hindgut. Expressed in the salivary glands from embryonic stage 12 onwards. During embryonic stages 12-13, expressed in the posterior midgut and hindgut. During embryonic stages 14-15, expression continues in the hindgut. During embryonic stages 16-17, expressed in the antennomaxillary complex. In third instar larvae, ubiquitously expressed in wing, with increased expression in the notum and ventral wing pouch, eye-antennal, leg and haltere imaginal disks.

Its subcellular location is the golgi apparatus membrane. It carries out the reaction L-seryl-[protein] + UDP-N-acetyl-alpha-D-galactosamine = a 3-O-[N-acetyl-alpha-D-galactosaminyl]-L-seryl-[protein] + UDP + H(+). The enzyme catalyses L-threonyl-[protein] + UDP-N-acetyl-alpha-D-galactosamine = a 3-O-[N-acetyl-alpha-D-galactosaminyl]-L-threonyl-[protein] + UDP + H(+). It participates in protein modification; protein glycosylation. In terms of biological role, glycopeptide transferase involved in O-linked oligosaccharide biosynthesis, which catalyzes the transfer of an N-acetyl-D-galactosamine residue to an already glycosylated peptide. In contrast to other proteins of the family, it does not act as a peptide transferase that transfers GalNAc onto serine or threonine residue on the protein receptor, but instead requires the prior addition of a GalNAc on a peptide before adding additional GalNAc moieties. Some peptide transferase activity is however not excluded, considering that its appropriate peptide substrate may remain unidentified. Prefers the monoglycosylated Muc5AC-3 as substrate. Might have a role in protein O-glycosylation in the Golgi and thereby in establishing and/or maintaining a proper secretory apparatus structure. The protein is N-acetylgalactosaminyltransferase 7 of Drosophila melanogaster (Fruit fly).